Reading from the N-terminus, the 273-residue chain is Ribosomal RNA small subunit methyltransferase A (273 aa).

S-adenosyl-L-methionine contacts are provided by Asn18, Leu20, Gly45, Glu66, Asp91, and Asn113.

Belongs to the class I-like SAM-binding methyltransferase superfamily. rRNA adenine N(6)-methyltransferase family. RsmA subfamily.

It is found in the cytoplasm. It catalyses the reaction adenosine(1518)/adenosine(1519) in 16S rRNA + 4 S-adenosyl-L-methionine = N(6)-dimethyladenosine(1518)/N(6)-dimethyladenosine(1519) in 16S rRNA + 4 S-adenosyl-L-homocysteine + 4 H(+). Its function is as follows. Specifically dimethylates two adjacent adenosines (A1518 and A1519) in the loop of a conserved hairpin near the 3'-end of 16S rRNA in the 30S particle. May play a critical role in biogenesis of 30S subunits. This Cronobacter sakazakii (strain ATCC BAA-894) (Enterobacter sakazakii) protein is Ribosomal RNA small subunit methyltransferase A.